The following is a 447-amino-acid chain: Rab GDP dissociation inhibitor alpha (447 aa).

It belongs to the Rab GDI family. As to quaternary structure, interacts with RHOH. Interacts with the non-phosphorylated forms of RAB1A, RAB3A, RAB5A, RAB5B, RAB5C, RAB8A, RAB8B, RAB10, RAB12, RAB35, and RAB43.

Its subcellular location is the cytoplasm. It localises to the golgi apparatus. It is found in the trans-Golgi network. Regulates the GDP/GTP exchange reaction of most Rab proteins by inhibiting the dissociation of GDP from them, and the subsequent binding of GTP to them. Promotes the dissociation of GDP-bound Rab proteins from the membrane and inhibits their activation. Promotes the dissociation of RAB1A, RAB3A, RAB5A and RAB10 from membranes. The protein is Rab GDP dissociation inhibitor alpha (GDI1) of Macaca fascicularis (Crab-eating macaque).